Consider the following 247-residue polypeptide: Small ribosomal subunit protein uS2 (247 aa).

This sequence belongs to the universal ribosomal protein uS2 family.

The polypeptide is Small ribosomal subunit protein uS2 (Pseudomonas syringae pv. tomato (strain ATCC BAA-871 / DC3000)).